The sequence spans 527 residues: Light-independent protochlorophyllide reductase subunit B (527 aa).

Asp36 is a [4Fe-4S] cluster binding site. Asp292 (proton donor) is an active-site residue. 428–429 provides a ligand contact to substrate; sequence GL.

The protein belongs to the ChlB/BchB/BchZ family. Protochlorophyllide reductase is composed of three subunits; BchL, BchN and BchB. Forms a heterotetramer of two BchB and two BchN subunits. Requires [4Fe-4S] cluster as cofactor.

The enzyme catalyses chlorophyllide a + oxidized 2[4Fe-4S]-[ferredoxin] + 2 ADP + 2 phosphate = protochlorophyllide a + reduced 2[4Fe-4S]-[ferredoxin] + 2 ATP + 2 H2O. Its pathway is porphyrin-containing compound metabolism; bacteriochlorophyll biosynthesis (light-independent). In terms of biological role, component of the dark-operative protochlorophyllide reductase (DPOR) that uses Mg-ATP and reduced ferredoxin to reduce ring D of protochlorophyllide (Pchlide) to form chlorophyllide a (Chlide). This reaction is light-independent. The NB-protein (BchN-BchB) is the catalytic component of the complex. The chain is Light-independent protochlorophyllide reductase subunit B from Chlorobium phaeovibrioides (strain DSM 265 / 1930) (Prosthecochloris vibrioformis (strain DSM 265)).